Reading from the N-terminus, the 87-residue chain is DNA-directed RNA polymerase subunit omega (87 aa).

This sequence belongs to the RNA polymerase subunit omega family. As to quaternary structure, the RNAP catalytic core consists of 2 alpha, 1 beta, 1 beta' and 1 omega subunit. When a sigma factor is associated with the core the holoenzyme is formed, which can initiate transcription.

It carries out the reaction RNA(n) + a ribonucleoside 5'-triphosphate = RNA(n+1) + diphosphate. In terms of biological role, promotes RNA polymerase assembly. Latches the N- and C-terminal regions of the beta' subunit thereby facilitating its interaction with the beta and alpha subunits. The polypeptide is DNA-directed RNA polymerase subunit omega (Alcanivorax borkumensis (strain ATCC 700651 / DSM 11573 / NCIMB 13689 / SK2)).